We begin with the raw amino-acid sequence, 588 residues long: Putative pentatricopeptide repeat-containing protein At5g52630 (588 aa).

11 PPR repeats span residues 14-48, 49-79, 80-114, 115-149, 150-180, 181-215, 216-250, 251-281, 282-316, 317-351, and 352-386; these read NYNQICDLLLSSARTRSTIKGLQLHGYVVKSGLSL, IPLVANNLINFYSKSQLPFDSRRAFEDSPQK, SSTTWSSIISCFAQNELPWMSLEFLKKMMAGNLRP, DDHVLPSATKSCAILSRCDIGRSVHCLSMKTGYDA, DVFVGSSLVDMYAKCGEIVYARKMFDEMPQR, NVVTWSGMMYGYAQMGENEEALWLFKEALFENLAV, NDYSFSSVISVCANSTLLELGRQIHGLSIKSSFDS, SSFVGSSLVSLYSKCGVPEGAYQVFNEVPVK, NLGIWNAMLKAYAQHSHTQKVIELFKRMKLSGMKP, NFITFLNVLNACSHAGLVDEGRYYFDQMKESRIEP, and TDKHYASLVDMLGRAGRLQEALEVITNMPIDPTES. Residues 387 to 462 form a type E motif region; that stretch reads VWGALLTSCT…ETGLSWVEER (76 aa). A type E(+) motif region spans residues 463–493; it reads NKVHTFAAGERRHEKSKEIYEKLAELGEEME. A type DYW motif region spans residues 494 to 588; it reads KAGYIADTSY…DGKCSCNDYW (95 aa).

The protein belongs to the PPR family. PCMP-H subfamily.

The chain is Putative pentatricopeptide repeat-containing protein At5g52630 (PCMP-H52) from Arabidopsis thaliana (Mouse-ear cress).